A 259-amino-acid polypeptide reads, in one-letter code: TLC domain-containing protein 4 (259 aa).

6 helical membrane passes run 6–26 (FISYCVVTGSFLGFQLLFSII), 53–73 (CVSTTHALVVGSGCLYILAYD), 86–106 (FWVKMNVAITCGYLVHDLLLL), 117–133 (YMVCHHLAVFYSYGYVL), 172–192 (PVLLNGLAMALVFFIVRIAVI), and 213–233 (IGPQVAWIVSCVVLDILNVFW). A TLC domain is found at 44–246 (GKQCEWDSRC…IARGFYKVVK (203 aa)).

The protein belongs to the TLCD4 family.

It localises to the membrane. In Xenopus tropicalis (Western clawed frog), this protein is TLC domain-containing protein 4 (tlcd4).